A 397-amino-acid polypeptide reads, in one-letter code: Protein ROH1D (397 aa).

A helical transmembrane segment spans residues 247–267; that stretch reads LIVPVYTMTTVLLFVMWALVA.

Belongs to the ROH1 family. Interacts with EXO70C2. Mostly expressed in mature pollen.

It localises to the membrane. Its subcellular location is the cytoplasm. The protein resides in the cytosol. Involved in the regulation of plant growth, and modulates pollen development to ensure male fertility. May also affect the composition of the inner seed coat mucilage layer. The sequence is that of Protein ROH1D from Arabidopsis thaliana (Mouse-ear cress).